The chain runs to 98 residues: Large ribosomal subunit protein uL23 (98 aa).

Belongs to the universal ribosomal protein uL23 family. In terms of assembly, part of the 50S ribosomal subunit. Contacts protein L29, and trigger factor when it is bound to the ribosome.

Its function is as follows. One of the early assembly proteins it binds 23S rRNA. One of the proteins that surrounds the polypeptide exit tunnel on the outside of the ribosome. Forms the main docking site for trigger factor binding to the ribosome. The protein is Large ribosomal subunit protein uL23 of Teredinibacter turnerae (strain ATCC 39867 / T7901).